Consider the following 459-residue polypeptide: VGFKAGVKDYKLTYYTPDYETKDTDILAAFRVTPQPGVPPEEAGAAVAAESSTGTWTTVWTDGLTSLDRYKGRCYHIEPVVGEENQYIAYVAYPLDLFEEGSVTNMFTSIVGNVFGFKALRALRLEDLRIPVAYVKTFQGPPHGIQVERDKLNKYGRPLLGCTIKPKLGLSAKNYGRAVYECLRGGLDFTKDDENVNSQPFMRWRDRFLFCAEAINKAQAETGEIKGHYLNATAGTCEEMMKRAVFARELGVPIVMHDYLTGGFTANTSLAHYCRDNGLLLHIHRAMHAVIDRQKNHGIHFRVLAKALRMSGGDHIHAGTVVGKLEGEREITLGFVDLLRDDFIEKDRSRGIYFTQDWVSLPGVLPVASGGIHVWHMPALTEIFGDDSVLQFGGGTLGHPWGNAPGAVANRVALEACVQARNEGRDLAREGNEIIREACKWSPELAAACEVWKAIKFEF.

Lys4 bears the N6,N6,N6-trimethyllysine mark. 2 residues coordinate substrate: Asn113 and Thr163. Lys165 (proton acceptor) is an active-site residue. Lys167 contributes to the substrate binding site. Lys191, Asp193, and Glu194 together coordinate Mg(2+). The residue at position 191 (Lys191) is an N6-carboxylysine. His284 (proton acceptor) is an active-site residue. Substrate-binding residues include Arg285, His317, and Ser369.

The protein belongs to the RuBisCO large chain family. Type I subfamily. In terms of assembly, heterohexadecamer of 8 large chains and 8 small chains; disulfide-linked. The disulfide link is formed within the large subunit homodimers. Mg(2+) is required as a cofactor. In terms of processing, the disulfide bond which can form in the large chain dimeric partners within the hexadecamer appears to be associated with oxidative stress and protein turnover.

Its subcellular location is the plastid. The protein localises to the chloroplast. It carries out the reaction 2 (2R)-3-phosphoglycerate + 2 H(+) = D-ribulose 1,5-bisphosphate + CO2 + H2O. The enzyme catalyses D-ribulose 1,5-bisphosphate + O2 = 2-phosphoglycolate + (2R)-3-phosphoglycerate + 2 H(+). In terms of biological role, ruBisCO catalyzes two reactions: the carboxylation of D-ribulose 1,5-bisphosphate, the primary event in carbon dioxide fixation, as well as the oxidative fragmentation of the pentose substrate in the photorespiration process. Both reactions occur simultaneously and in competition at the same active site. The protein is Ribulose bisphosphate carboxylase large chain of Garrya elliptica (Wavyleaf silktassel).